The primary structure comprises 271 residues: 3-methyl-2-oxobutanoate hydroxymethyltransferase (271 aa).

Mg(2+) is bound by residues Asp-53 and Asp-92. 3-methyl-2-oxobutanoate contacts are provided by residues 53 to 54, Asp-92, and Lys-120; that span reads DS. Glu-122 is a binding site for Mg(2+). The active-site Proton acceptor is the Glu-189.

Belongs to the PanB family. Homodecamer; pentamer of dimers. Requires Mg(2+) as cofactor.

Its subcellular location is the cytoplasm. The catalysed reaction is 3-methyl-2-oxobutanoate + (6R)-5,10-methylene-5,6,7,8-tetrahydrofolate + H2O = 2-dehydropantoate + (6S)-5,6,7,8-tetrahydrofolate. Its pathway is cofactor biosynthesis; (R)-pantothenate biosynthesis; (R)-pantoate from 3-methyl-2-oxobutanoate: step 1/2. Functionally, catalyzes the reversible reaction in which hydroxymethyl group from 5,10-methylenetetrahydrofolate is transferred onto alpha-ketoisovalerate to form ketopantoate. This is 3-methyl-2-oxobutanoate hydroxymethyltransferase from Paraburkholderia xenovorans (strain LB400).